A 293-amino-acid chain; its full sequence is uncharacterized protein (293 aa).

Residues 1–60 (MHITLRQLEVFAEVLKSGSTTQASVMLALSQSAVSAALTDLEGQLGVQLFDRVGKRLVVN) form the HTH lysR-type domain. Positions 20 to 39 (TTQASVMLALSQSAVSAALT) form a DNA-binding region, H-T-H motif.

It belongs to the LysR transcriptional regulatory family.

This is an uncharacterized protein from Escherichia coli O157:H7.